Here is a 342-residue protein sequence, read N- to C-terminus: MTLLLAGDIGGTKTILRLVEISNSSELHNIYEESYQSGDFPDLVPMVQQFLVKANIPSHPEKACFAIAGPVVNNTAKLTNLVWFLDTERLAQELSIPFISLINDFAAVGYGIFGLNKQDLLTLQAGKHQPEAPIAIIGAGTGLGQGFLIKQGNQYQVFPSEGGHADFAPRNELEFQLLKYLLDKHDIQRVSVERVVSGQGIVAIYQFLRDRKLATESPEIAQVVRTWEQQAGQAEKTVDPGAAIGKAAVQGSDRLSEQALQLFIDAYGAEAGNLALKLLPYGGLYIAGGIAPKILPLIENSNFLLNFSQKGRMRPLLAEIPVHIILNQQVGLIGAALCAARL.

Position 7-12 (7-12 (GDIGGT)) interacts with ATP.

It belongs to the bacterial glucokinase family.

The protein resides in the cytoplasm. The enzyme catalyses D-glucose + ATP = D-glucose 6-phosphate + ADP + H(+). The chain is Glucokinase from Nostoc sp. (strain PCC 7120 / SAG 25.82 / UTEX 2576).